The chain runs to 261 residues: Acetylglutamate kinase (261 aa).

Residues 45-46, R67, and N162 contribute to the substrate site; that span reads GG.

It belongs to the acetylglutamate kinase family. ArgB subfamily.

The protein localises to the cytoplasm. It catalyses the reaction N-acetyl-L-glutamate + ATP = N-acetyl-L-glutamyl 5-phosphate + ADP. Its pathway is amino-acid biosynthesis; L-arginine biosynthesis; N(2)-acetyl-L-ornithine from L-glutamate: step 2/4. Catalyzes the ATP-dependent phosphorylation of N-acetyl-L-glutamate. The protein is Acetylglutamate kinase of Bacteroides fragilis (strain ATCC 25285 / DSM 2151 / CCUG 4856 / JCM 11019 / LMG 10263 / NCTC 9343 / Onslow / VPI 2553 / EN-2).